We begin with the raw amino-acid sequence, 308 residues long: Cobalamin biosynthesis protein CobD (308 aa).

Transmembrane regions (helical) follow at residues 1 to 21 (MEILLIFLLALVIDMVFGDPP), 50 to 70 (FVYGIVMVIFTMALFFVPVYF), 71 to 91 (LLDWLQGINSIVYIIVSAILF), 151 to 171 (IGDGFVAPLFFFLIFGVPGVM), 202 to 222 (VLNFIPARLSALCILVASFFG), and 284 to 304 (LVLINNAGCIWVLISVGVIYF).

It belongs to the CobD/CbiB family.

The protein localises to the cell membrane. It functions in the pathway cofactor biosynthesis; adenosylcobalamin biosynthesis. Functionally, converts cobyric acid to cobinamide by the addition of aminopropanol on the F carboxylic group. The chain is Cobalamin biosynthesis protein CobD from Dehalococcoides mccartyi (strain CBDB1).